The primary structure comprises 311 residues: 4-hydroxy-tetrahydrodipicolinate synthase (311 aa).

Thr49 is a pyruvate binding site. Tyr138 serves as the catalytic Proton donor/acceptor. Catalysis depends on Lys166, which acts as the Schiff-base intermediate with substrate. Ile207 contacts pyruvate.

This sequence belongs to the DapA family. Homotetramer; dimer of dimers.

It is found in the cytoplasm. The catalysed reaction is L-aspartate 4-semialdehyde + pyruvate = (2S,4S)-4-hydroxy-2,3,4,5-tetrahydrodipicolinate + H2O + H(+). Its pathway is amino-acid biosynthesis; L-lysine biosynthesis via DAP pathway; (S)-tetrahydrodipicolinate from L-aspartate: step 3/4. In terms of biological role, catalyzes the condensation of (S)-aspartate-beta-semialdehyde [(S)-ASA] and pyruvate to 4-hydroxy-tetrahydrodipicolinate (HTPA). The protein is 4-hydroxy-tetrahydrodipicolinate synthase of Lactobacillus acidophilus (strain ATCC 700396 / NCK56 / N2 / NCFM).